The sequence spans 108 residues: Protein S100-A15A (108 aa).

The EF-hand domain occupies Lys-53–Asp-88. 5 residues coordinate Ca(2+): Asp-66, Asn-68, Asp-70, Gln-72, and Glu-77.

Belongs to the S-100 family.

In Gorilla gorilla gorilla (Western lowland gorilla), this protein is Protein S100-A15A (S100A15A).